The following is a 102-amino-acid chain: NADH-quinone oxidoreductase subunit K (102 aa).

Helical transmembrane passes span 6–26, 30–50, and 62–82; these read MEHG…GLMV, ILFI…AFVV, and VMFI…LAIL.

It belongs to the complex I subunit 4L family. As to quaternary structure, NDH-1 is composed of 13 different subunits. Subunits NuoA, H, J, K, L, M, N constitute the membrane sector of the complex.

It is found in the cell inner membrane. It catalyses the reaction a quinone + NADH + 5 H(+)(in) = a quinol + NAD(+) + 4 H(+)(out). In terms of biological role, NDH-1 shuttles electrons from NADH, via FMN and iron-sulfur (Fe-S) centers, to quinones in the respiratory chain. The immediate electron acceptor for the enzyme in this species is believed to be ubiquinone. Couples the redox reaction to proton translocation (for every two electrons transferred, four hydrogen ions are translocated across the cytoplasmic membrane), and thus conserves the redox energy in a proton gradient. The protein is NADH-quinone oxidoreductase subunit K of Ectopseudomonas mendocina (strain ymp) (Pseudomonas mendocina).